The primary structure comprises 363 residues: tRNA N6-adenosine threonylcarbamoyltransferase (363 aa).

Positions 117 and 121 each coordinate Fe cation. Substrate contacts are provided by residues 139–143 (LVSGG), Asp172, Gly185, and Asn287. A Fe cation-binding site is contributed by Asp315.

The protein belongs to the KAE1 / TsaD family. The cofactor is Fe(2+).

The protein resides in the cytoplasm. The catalysed reaction is L-threonylcarbamoyladenylate + adenosine(37) in tRNA = N(6)-L-threonylcarbamoyladenosine(37) in tRNA + AMP + H(+). Functionally, required for the formation of a threonylcarbamoyl group on adenosine at position 37 (t(6)A37) in tRNAs that read codons beginning with adenine. Is involved in the transfer of the threonylcarbamoyl moiety of threonylcarbamoyl-AMP (TC-AMP) to the N6 group of A37, together with TsaE and TsaB. TsaD likely plays a direct catalytic role in this reaction. In Cereibacter sphaeroides (strain ATCC 17025 / ATH 2.4.3) (Rhodobacter sphaeroides), this protein is tRNA N6-adenosine threonylcarbamoyltransferase.